The following is a 301-amino-acid chain: Transcription elongation factor A protein 1 (301 aa).

N-acetylmethionine is present on Met-1. The TFIIS N-terminal domain maps to 3 to 80 (DEVVRIAKKM…KSWKKLLDGP (78 aa)). Residue Lys-55 forms a Glycyl lysine isopeptide (Lys-Gly) (interchain with G-Cter in ubiquitin) linkage. Ser-57, Ser-81, Ser-97, and Ser-100 each carry phosphoserine. Residues 76 to 93 (LLDGPSTDKDPEEKKKEP) are compositionally biased toward basic and acidic residues. Positions 76-139 (LLDGPSTDKD…FPRAPSTSDS (64 aa)) are disordered. The TFIIS central domain occupies 140–256 (VRLKCREMLA…EHQMAKTGGT (117 aa)). Residues 259–299 (DLFTCGKCKKKNCTYTQVQTRSADEPMTTFVVCNECGNRWK) form a TFIIS-type zinc finger. Zn(2+)-binding residues include Cys-263, Cys-266, Cys-291, and Cys-294.

The protein belongs to the TFS-II family. As to quaternary structure, interacts with EAF2. Associates with UBR5 and forms a transcription regulatory complex made of CDK9, Pol II, UBR5 and TCEA1/TFIIS. Part of TBP-based Pol II pre-initiation complex (PIC), in which Pol II core assembles with general transcription factors and other specific initiation factors including GTF2E1, GTF2E2, GTF2F1, GTF2F2, TCEA1, ERCC2, ERCC3, GTF2H2, GTF2H3, GTF2H4, GTF2H5, GTF2A1, GTF2A2, GTF2B and TBP; this large multi-subunit PIC complex mediates DNA unwinding and targets Pol II core to the transcription start site where the first phosphodiester bond forms.

Its subcellular location is the nucleus. Necessary for efficient RNA polymerase II transcription elongation past template-encoded arresting sites. The arresting sites in DNA have the property of trapping a certain fraction of elongating RNA polymerases that pass through, resulting in locked ternary complexes. Cleavage of the nascent transcript by S-II allows the resumption of elongation from the new 3'-terminus. The protein is Transcription elongation factor A protein 1 (Tcea1) of Mus musculus (Mouse).